The chain runs to 721 residues: Probable acyl-activating enzyme 17, peroxisomal (721 aa).

The Microbody targeting signal signature appears at 719 to 721; it reads SKL.

Belongs to the ATP-dependent AMP-binding enzyme family. As to expression, expressed in leaves, stems and developing seeds.

It is found in the peroxisome. Its function is as follows. May act as an acid--thiol ligase that activates carboxylic acids by forming acyl-CoAs. The sequence is that of Probable acyl-activating enzyme 17, peroxisomal (AAE17) from Arabidopsis thaliana (Mouse-ear cress).